Reading from the N-terminus, the 33-residue chain is Putative tumor antigen NA88-A (33 aa).

As to expression, expressed in testis and melanoma cell lines.

The protein is Putative tumor antigen NA88-A (VENTXP1) of Homo sapiens (Human).